The following is a 622-amino-acid chain: Apical membrane antigen 1 (622 aa).

The N-terminal stretch at 1–24 (MRKLYCVLLLSAFEFTYMINFGRG) is a signal peptide. Topologically, residues 25–546 (QNYWEHPYQK…EHKPTYDKMK (522 aa)) are extracellular. 5 disulfides stabilise this stretch: Cys149-Cys302, Cys217-Cys247, Cys263-Cys275, Cys320-Cys418, and Cys337-Cys409. Asn162 carries N-linked (GlcNAc...) asparagine glycosylation. Residues Asn286, Asn371, Asn421, Asn422, and Asn499 are each glycosylated (N-linked (GlcNAc...) asparagine). Disulfide bonds link Cys443–Cys502, Cys490–Cys507, and Cys492–Cys509. Residues 547–567 (IIIASSAAVAVLATILMVYLY) traverse the membrane as a helical segment. Residues 568 to 622 (KRKGNAEKYDKMDEPQHYGKSNSRNDEMLDPEASFWGEEKRASHTTPVLMEKPYY) are Cytoplasmic-facing. Positions 578–594 (KMDEPQHYGKSNSRNDE) are enriched in basic and acidic residues. Residues 578-607 (KMDEPQHYGKSNSRNDEMLDPEASFWGEEK) form a disordered region.

This sequence belongs to the apicomplexan parasites AMA1 family.

The protein localises to the membrane. Functionally, involved in parasite invasion of erythrocytes. The protein is Apical membrane antigen 1 (AMA-1) of Plasmodium falciparum (isolate FC27 / Papua New Guinea).